The primary structure comprises 469 residues: Uronate isomerase (469 aa).

This sequence belongs to the metallo-dependent hydrolases superfamily. Uronate isomerase family.

It catalyses the reaction D-glucuronate = D-fructuronate. It carries out the reaction aldehydo-D-galacturonate = keto-D-tagaturonate. Its pathway is carbohydrate metabolism; pentose and glucuronate interconversion. In Pectobacterium atrosepticum (strain SCRI 1043 / ATCC BAA-672) (Erwinia carotovora subsp. atroseptica), this protein is Uronate isomerase.